The sequence spans 303 residues: Pyridoxal 5'-phosphate synthase subunit PdxS (303 aa).

Asp33 provides a ligand contact to D-ribose 5-phosphate. The Schiff-base intermediate with D-ribose 5-phosphate role is filled by Lys90. Gly162 is a binding site for D-ribose 5-phosphate. Residue Arg174 coordinates D-glyceraldehyde 3-phosphate. D-ribose 5-phosphate is bound by residues Gly223 and 244-245 (GS).

The protein belongs to the PdxS/SNZ family. As to quaternary structure, in the presence of PdxT, forms a dodecamer of heterodimers.

The catalysed reaction is aldehydo-D-ribose 5-phosphate + D-glyceraldehyde 3-phosphate + L-glutamine = pyridoxal 5'-phosphate + L-glutamate + phosphate + 3 H2O + H(+). It participates in cofactor biosynthesis; pyridoxal 5'-phosphate biosynthesis. Its function is as follows. Catalyzes the formation of pyridoxal 5'-phosphate from ribose 5-phosphate (RBP), glyceraldehyde 3-phosphate (G3P) and ammonia. The ammonia is provided by the PdxT subunit. Can also use ribulose 5-phosphate and dihydroxyacetone phosphate as substrates, resulting from enzyme-catalyzed isomerization of RBP and G3P, respectively. In Mycobacterium avium (strain 104), this protein is Pyridoxal 5'-phosphate synthase subunit PdxS.